The sequence spans 1906 residues: A disintegrin and metalloproteinase with thrombospondin motifs 20 (1906 aa).

The N-terminal stretch at 1–26 is a signal peptide; the sequence is MRVAKWLTGLLCPISLLLTGSWEVRF. The propeptide occupies 27–249; sequence HPRQEALVKT…RSQLHSRNKR (223 aa). Asparagine 92 and asparagine 221 each carry an N-linked (GlcNAc...) asparagine glycan. The interval 201-222 is disordered; it reads PCEVSENQMEKTALPSQSSRNT. The Peptidase M12B domain maps to 255–464; sequence RYVEVMVTAD…GHGECLLDKP (210 aa). 11 disulfide bridges follow: cysteine 330-cysteine 383, cysteine 359-cysteine 365, cysteine 377-cysteine 459, cysteine 415-cysteine 443, cysteine 486-cysteine 508, cysteine 497-cysteine 518, cysteine 503-cysteine 537, cysteine 531-cysteine 542, cysteine 565-cysteine 602, cysteine 569-cysteine 607, and cysteine 580-cysteine 592. Histidine 399 is a Zn(2+) binding site. The active site involves glutamate 400. Residues histidine 403 and histidine 409 each coordinate Zn(2+). Positions 465 to 552 constitute a Disintegrin domain; that stretch reads NGRTYDLSPQ…VTRDMETRPV (88 aa). Residues 553–608 form the TSP type-1 1 domain; that stretch reads DGEWGPWGPYSSCSRTCGGGIKSTARLCDRPEPRNGGRYCVGRRMKFRSCNTDSCP. N-linked (GlcNAc...) asparagine glycans are attached at residues asparagine 714, asparagine 798, and asparagine 805. The interval 721–842 is spacer; that stretch reads AGVFNSAHYG…FNIPIEERSN (122 aa). 7 consecutive TSP type-1 domains span residues 843–901, 906–962, 962–1015, 1017–1074, 1075–1131, 1148–1202, and 1203–1260; these read LFSW…MDCE, IIGK…GSCV, VLTR…NCNE, PCPS…RACA, SWHV…APCL, RAAQ…LCFS, and PCGE…AACP. Asparagine 1057 carries an N-linked (GlcNAc...) asparagine glycan. Residues 1265 to 1295 form a disordered region; the sequence is RAPSSSEQPSHVPSRNVPLTHKPGENQDQGA. Positions 1266-1277 are enriched in polar residues; that stretch reads APSSSEQPSHVP. 7 consecutive TSP type-1 domains span residues 1300–1351, 1354–1411, 1412–1465, 1468–1526, 1527–1584, 1585–1648, and 1650–1706; these read RGNQ…RHCG, PCPH…HACP, EDVS…KACR, RCPS…QDCM, RYQW…PHCK, YSVV…LRSC, and HVAT…NDCK. Asparagine 1562 is a glycosylation site (N-linked (GlcNAc...) asparagine). The region spanning 1707–1906 is the GON domain; it reads LLTTCKELQV…MATGLSIQVL (200 aa). N-linked (GlcNAc...) asparagine glycosylation is found at asparagine 1719, asparagine 1759, and asparagine 1777.

It depends on Zn(2+) as a cofactor. Post-translationally, the precursor is cleaved by a furin endopeptidase. In terms of processing, glycosylated. Can be O-fucosylated by POFUT2 on a serine or a threonine residue found within the consensus sequence C1-X(2)-(S/T)-C2-G of the TSP type-1 repeat domains where C1 and C2 are the first and second cysteine residue of the repeat, respectively. Fucosylated repeats can then be further glycosylated by the addition of a beta-1,3-glucose residue by the glucosyltransferase, B3GALTL. Fucosylation mediates the efficient secretion of ADAMTS family members. Can also be C-glycosylated with one or two mannose molecules on tryptophan residues within the consensus sequence W-X-X-W of the TPRs, and N-glycosylated. These other glycosylations can also facilitate secretion. In terms of tissue distribution, expressed at low level in testis and brain.

Its subcellular location is the secreted. The protein localises to the extracellular space. The protein resides in the extracellular matrix. In terms of biological role, may play a role in tissue-remodeling process occurring in both normal and pathological conditions. May have a protease-independent function in the transport from the endoplasmic reticulum to the Golgi apparatus of secretory cargos, mediated by the GON domain. The polypeptide is A disintegrin and metalloproteinase with thrombospondin motifs 20 (Adamts20) (Mus musculus (Mouse)).